The sequence spans 196 residues: ATP-dependent Clp protease proteolytic subunit (196 aa).

The active-site Nucleophile is Ser-101. Residue His-126 is part of the active site.

It belongs to the peptidase S14 family. Component of the chloroplastic Clp protease core complex.

It localises to the plastid. Its subcellular location is the chloroplast stroma. The catalysed reaction is Hydrolysis of proteins to small peptides in the presence of ATP and magnesium. alpha-casein is the usual test substrate. In the absence of ATP, only oligopeptides shorter than five residues are hydrolyzed (such as succinyl-Leu-Tyr-|-NHMec, and Leu-Tyr-Leu-|-Tyr-Trp, in which cleavage of the -Tyr-|-Leu- and -Tyr-|-Trp bonds also occurs).. Functionally, cleaves peptides in various proteins in a process that requires ATP hydrolysis. Has a chymotrypsin-like activity. Plays a major role in the degradation of misfolded proteins. The chain is ATP-dependent Clp protease proteolytic subunit from Coffea arabica (Arabian coffee).